Here is a 197-residue protein sequence, read N- to C-terminus: Signal peptidase complex catalytic subunit SEC11 (197 aa).

The Cytoplasmic segment spans residues 1–14 (MLSSLAPYMANPRQ). Residues 15–33 (TLTQVLNFALVLSTAFMLW) form a helical; Signal-anchor for type II membrane protein membrane-spanning segment. At 34 to 197 (KGLSVVTNST…MGLMVVLQRE (164 aa)) the chain is on the lumenal side. A glycan (N-linked (GlcNAc...) asparagine) is linked at asparagine 41. Catalysis depends on charge relay system residues serine 53 and histidine 92. Over residues 102 to 115 (PGREDKKSVKKGGE) the composition is skewed to basic and acidic residues. Positions 102 to 134 (PGREDKKSVKKGGEEGEETSSTPSQKLLTKGDN) are disordered. Aspartate 139 (charge relay system) is an active-site residue. The tract at residues 183 to 194 (VLLGFMGLMVVL) is C-terminal short (CTS) helix.

This sequence belongs to the peptidase S26B family. In terms of assembly, component of the signal peptidase complex (SPC) composed of a catalytic subunit SEC11 and three accessory subunits SPC1, SPC2 and SPC3. The complex induces a local thinning of the ER membrane which is used to measure the length of the signal peptide (SP) h-region of protein substrates. This ensures the selectivity of the complex towards h-regions shorter than 18-20 amino acids. SPC associates with the translocon complex.

It localises to the endoplasmic reticulum membrane. It carries out the reaction Cleavage of hydrophobic, N-terminal signal or leader sequences from secreted and periplasmic proteins.. Catalytic component of the signal peptidase complex (SPC) which catalyzes the cleavage of N-terminal signal sequences from nascent proteins as they are translocated into the lumen of the endoplasmic reticulum. Specifically cleaves N-terminal signal peptides that contain a hydrophobic alpha-helix (h-region) shorter than 18-20 amino acids. The polypeptide is Signal peptidase complex catalytic subunit SEC11 (SEC11) (Paracoccidioides lutzii (strain ATCC MYA-826 / Pb01) (Paracoccidioides brasiliensis)).